Reading from the N-terminus, the 206-residue chain is Putative apoptosis inhibitor 021L (206 aa).

The segment covering 95-105 (TSKSPVSNQPS) has biased composition (polar residues). The interval 95–114 (TSKSPVSNQPSPEEDEPIPD) is disordered. The segment at 157–195 (CVVCQANVRNVVFVPCNHLATCISCSANPLMPKKCPMCR) adopts an RING-type zinc-finger fold.

It belongs to the IIV-6 193R family.

In terms of biological role, plays a role early in infection by preventing host cell apoptosis. This chain is Putative apoptosis inhibitor 021L, found in Aedes vexans (Inland floodwater mosquito).